Reading from the N-terminus, the 184-residue chain is Elongation factor P (184 aa).

Belongs to the elongation factor P family.

It is found in the cytoplasm. Its pathway is protein biosynthesis; polypeptide chain elongation. Its function is as follows. Involved in peptide bond synthesis. Stimulates efficient translation and peptide-bond synthesis on native or reconstituted 70S ribosomes in vitro. Probably functions indirectly by altering the affinity of the ribosome for aminoacyl-tRNA, thus increasing their reactivity as acceptors for peptidyl transferase. The polypeptide is Elongation factor P (Mycoplasma mycoides subsp. mycoides SC (strain CCUG 32753 / NCTC 10114 / PG1)).